The chain runs to 371 residues: 4-hydroxy-3-methylbut-2-en-1-yl diphosphate synthase (flavodoxin) (371 aa).

C270, C273, C305, and E312 together coordinate [4Fe-4S] cluster.

This sequence belongs to the IspG family. [4Fe-4S] cluster is required as a cofactor.

The catalysed reaction is (2E)-4-hydroxy-3-methylbut-2-enyl diphosphate + oxidized [flavodoxin] + H2O + 2 H(+) = 2-C-methyl-D-erythritol 2,4-cyclic diphosphate + reduced [flavodoxin]. It functions in the pathway isoprenoid biosynthesis; isopentenyl diphosphate biosynthesis via DXP pathway; isopentenyl diphosphate from 1-deoxy-D-xylulose 5-phosphate: step 5/6. Functionally, converts 2C-methyl-D-erythritol 2,4-cyclodiphosphate (ME-2,4cPP) into 1-hydroxy-2-methyl-2-(E)-butenyl 4-diphosphate. The polypeptide is 4-hydroxy-3-methylbut-2-en-1-yl diphosphate synthase (flavodoxin) (Shewanella denitrificans (strain OS217 / ATCC BAA-1090 / DSM 15013)).